Here is a 154-residue protein sequence, read N- to C-terminus: RxLR effector protein PITG_12737 (154 aa).

Positions 1-16 are cleaved as a signal peptide; it reads MRVYFILILAVATVSG. Positions 42 to 58 match the RxLR-dEER motif; the sequence is RLLRAELTTDETYPEER.

This sequence belongs to the RxLR effector family.

The protein localises to the secreted. It is found in the host nucleus. It localises to the host cytoplasm. Its function is as follows. Effector that enhances P.infestans colonization of Nicotiana benthamiana leaves. The chain is RxLR effector protein PITG_12737 from Phytophthora infestans (strain T30-4) (Potato late blight agent).